The primary structure comprises 228 residues: PKHD-type hydroxylase xcc-b100_1388 (228 aa).

A Fe2OG dioxygenase domain is found at 78 to 180 (RIYPPLFNRY…RVASFFWIQS (103 aa)). Residues His-96, Asp-98, and His-161 each contribute to the Fe cation site. Arg-171 is a binding site for 2-oxoglutarate.

Fe(2+) serves as cofactor. The cofactor is L-ascorbate.

This is PKHD-type hydroxylase xcc-b100_1388 from Xanthomonas campestris pv. campestris (strain B100).